The chain runs to 583 residues: uncharacterized protein (583 aa).

This is an uncharacterized protein from Acanthamoeba polyphaga (Amoeba).